Reading from the N-terminus, the 298-residue chain is ATP-dependent Clp protease proteolytic subunit 5, chloroplastic (298 aa).

The N-terminal 100 residues, 1 to 100 (MAHACVSTSA…SSPYFPAYAQ (100 aa)), are a transit peptide targeting the chloroplast. Gly101 is subject to N-acetylglycine. Ser193 (nucleophile) is an active-site residue. His218 is a catalytic residue.

Belongs to the peptidase S14 family. Component of the chloroplastic Clp protease core complex which consist of at least 16 proteins: CLPP4 (3 copies), CLPP5 (3 copies), CLPR4 (2 copies), ClpP1 (1 copy), CLPP6 (1 copy), CLPR2 (1 copy), CLPT1 (1 copy), CLPT2 (1 copy) and 3 copies of CLPP3 and/or CLPR1 and/or CLPR3. The core complex is organized in two heptameric rings, one containing CLPP3,4,5,6 in a 1:2:3:1 ratio and the other CLPP1 and CLPR1,2,3,4 in a 3:1:1:1:1 ratio. Interacts with CHIP. In terms of processing, ubiquitinated in vitro by CHIP. In terms of tissue distribution, mostly expressed in leaves. Also detected in stems, and to a lower extent, in roots (at protein level).

Its subcellular location is the plastid. The protein localises to the chloroplast stroma. The enzyme catalyses Hydrolysis of proteins to small peptides in the presence of ATP and magnesium. alpha-casein is the usual test substrate. In the absence of ATP, only oligopeptides shorter than five residues are hydrolyzed (such as succinyl-Leu-Tyr-|-NHMec, and Leu-Tyr-Leu-|-Tyr-Trp, in which cleavage of the -Tyr-|-Leu- and -Tyr-|-Trp bonds also occurs).. Functionally, cleaves peptides in various proteins in a process that requires ATP hydrolysis. Has a chymotrypsin-like activity. Plays a major role in the degradation of misfolded proteins. The protein is ATP-dependent Clp protease proteolytic subunit 5, chloroplastic of Arabidopsis thaliana (Mouse-ear cress).